The sequence spans 862 residues: Active breakpoint cluster region-related protein (862 aa).

A disordered region spans residues 30–84 (DAEGNEEHKSSREGSETMPYIDESPTMSPQLSARSQDSVDGVSPTPTEVLLPGGE). Basic and acidic residues predominate over residues 34–44 (NEEHKSSREGS). The span at 54–67 (PTMSPQLSARSQDS) shows a compositional bias: polar residues. The DH domain occupies 93–286 (MRKLVLSGVL…QNFLSSINED (194 aa)). The PH domain maps to 303 to 462 (QLVKDGFLVE…WREAIQKLQK (160 aa)). The C2 domain occupies 488-616 (VHNVPIISHK…QSKNWHDDVI (129 aa)). Residues 650–848 (VKISVVTKRE…YYLQHPPISF (199 aa)) enclose the Rho-GAP domain.

The protein localises to the cell projection. The protein resides in the dendritic spine. Its subcellular location is the axon. It is found in the synapse. Functionally, protein with a unique structure having two opposing regulatory activities toward small GTP-binding proteins. The C-terminus is a GTPase-activating protein domain which stimulates GTP hydrolysis by RAC1, RAC2 and CDC42. Accelerates the intrinsic rate of GTP hydrolysis of RAC1 or CDC42, leading to down-regulation of the active GTP-bound form. The central Dbl homology (DH) domain functions as guanine nucleotide exchange factor (GEF) that modulates the GTPases CDC42, RHOA and RAC1. Promotes the conversion of CDC42, RHOA and RAC1 from the GDP-bound to the GTP-bound form. The polypeptide is Active breakpoint cluster region-related protein (abr) (Xenopus tropicalis (Western clawed frog)).